The chain runs to 197 residues: MIGHRISRLGSTIVKQLAREGYLATYGTKNLHRSYGHYLQSLPVVPRQARTSQEAWFLKSHKFCTSSTTSSENGDEETEKITIIFVDKDGEEIPVKVPIGMSVLEAAHENDIDLEGACEASLACSTCHVIVMDTEYYNKLEEPTDEENDMLDLAFGLTETSRLGCQVIARPELDGVRLAIPSATRNFAVDGFVPKPH.

The N-terminal 35 residues, 1-35 (MIGHRISRLGSTIVKQLAREGYLATYGTKNLHRSY), are a transit peptide targeting the mitochondrion. The 106-residue stretch at 79 to 184 (EKITIIFVDK…GVRLAIPSAT (106 aa)) folds into the 2Fe-2S ferredoxin-type domain. [2Fe-2S] cluster-binding residues include cysteine 118, cysteine 124, cysteine 127, and cysteine 165.

This sequence belongs to the adrenodoxin/putidaredoxin family. Requires [2Fe-2S] cluster as cofactor.

It localises to the mitochondrion matrix. Associates in vitro with the adrenodoxin reductase MFDR to form an efficient low potential electron transfer chain that is able to reduce cytochrome C. Functions as accessory mitochondrial protein involved with BIO2 in the plant biotin synthase reaction. This is Adrenodoxin-like protein 1, mitochondrial from Arabidopsis thaliana (Mouse-ear cress).